The primary structure comprises 115 residues: T cell receptor delta variable 1 (115 aa).

The N-terminal stretch at 1–21 (MLFSSLLCVFVAFSYSGSSVA) is a signal peptide. Positions 22 to 115 (QKVTQAQSSV…SAKYFCALGE (94 aa)) constitute an Ig-like domain. The cysteines at positions 43 and 111 are disulfide-linked.

In terms of assembly, gamma-delta TR is a heterodimer composed of a gamma and delta chain; disulfide-linked. The gamma-delta TR is associated with the transmembrane signaling CD3 coreceptor proteins following the stoichiometry: a single gamma-delta TR heterodimer associates with one CD3D-CD3E heterodimer, one CD3G-CD3E heterodimer and one CD247 homodimer forming a stable octameric structure. Upon activation, gamma-delta TR complex associates with FCER1G to initiate intracellular signaling.

It is found in the cell membrane. V region of the variable domain of T cell receptor (TR) delta chain that participates in the antigen recognition. Gamma-delta TRs recognize a variety of self and foreign non-peptide antigens frequently expressed at the epithelial boundaries between the host and external environment, including endogenous lipids presented by MH-like protein CD1D and phosphoantigens presented by butyrophilin-like molecule BTN3A1. Upon antigen recognition induces rapid, innate-like immune responses involved in pathogen clearance and tissue repair. Binding of gamma-delta TR complex to antigen triggers phosphorylation of immunoreceptor tyrosine-based activation motifs (ITAMs) in the CD3 chains by the LCK and FYN kinases, allowing the recruitment, phosphorylation, and activation of ZAP70 that facilitates phosphorylation of the scaffolding proteins LCP2 and LAT. This lead to the formation of a supramolecular signalosome that recruits the phospholipase PLCG1, resulting in calcium mobilization and ERK activation, ultimately leading to T cell expansion and differentiation into effector cells. Gamma-delta TRs are produced through somatic rearrangement of a limited repertoire of variable (V), diversity (D), and joining (J) genes. The potential diversity of gamma-delta TRs is conferred by the unique ability to rearrange (D) genes in tandem and to utilize all three reading frames. The combinatorial diversity is considerably increased by the sequence exonuclease trimming and random nucleotide (N) region additions which occur during the V-(D)-J rearrangements. In Homo sapiens (Human), this protein is T cell receptor delta variable 1.